A 157-amino-acid polypeptide reads, in one-letter code: Protein EOLA1 (157 aa).

The region spanning 6–92 is the ASCH domain; the sequence is LSFRQPYAGL…IAGLIDIGET (87 aa).

Belongs to the EOLA family. In terms of assembly, interacts with MT2A.

Functionally, may play a role in cell protection during the inflammatory response. In epithelial cells, negatively regulates IL6 production and apoptosis through the regulation of MT2A expression. This Mus musculus (Mouse) protein is Protein EOLA1.